The sequence spans 399 residues: Argininosuccinate synthase (399 aa).

Residue A9–S17 participates in ATP binding. An L-citrulline-binding site is contributed by Y87. G117 contacts ATP. L-aspartate contacts are provided by T119, N123, and D124. N123 contributes to the L-citrulline binding site. The L-citrulline site is built by R127, S176, S185, E261, and Y273.

Belongs to the argininosuccinate synthase family. Type 1 subfamily. In terms of assembly, homotetramer.

Its subcellular location is the cytoplasm. The catalysed reaction is L-citrulline + L-aspartate + ATP = 2-(N(omega)-L-arginino)succinate + AMP + diphosphate + H(+). It functions in the pathway amino-acid biosynthesis; L-arginine biosynthesis; L-arginine from L-ornithine and carbamoyl phosphate: step 2/3. The chain is Argininosuccinate synthase from Chlorobium chlorochromatii (strain CaD3).